A 262-amino-acid chain; its full sequence is Co-chaperone protein DjlA (262 aa).

Over 1–6 the chain is Periplasmic; that stretch reads MRFWGK. A helical transmembrane segment spans residues 7-30; it reads FFGFVIGFMFGRFFGALLGLWLGH. Residues 31–262 lie on the Cytoplasmic side of the membrane; the sequence is LYDKRPGGGA…DRVKSERGMR (232 aa). One can recognise a J domain in the interval 196–262; the sequence is DAYHLLGITA…DRVKSERGMR (67 aa).

Homodimer.

Its subcellular location is the cell inner membrane. Functionally, regulatory DnaK co-chaperone. Direct interaction between DnaK and DjlA is needed for the induction of the wcaABCDE operon, involved in the synthesis of a colanic acid polysaccharide capsule, possibly through activation of the RcsB/RcsC phosphotransfer signaling pathway. The colanic acid capsule may help the bacterium survive conditions outside the host. The protein is Co-chaperone protein DjlA of Shewanella oneidensis (strain ATCC 700550 / JCM 31522 / CIP 106686 / LMG 19005 / NCIMB 14063 / MR-1).